The following is a 780-amino-acid chain: Neutral ceramidase (780 aa).

The Cytoplasmic portion of the chain corresponds to M1 to F12. The helical; Signal-anchor for type II membrane protein transmembrane segment at L13–I33 threads the bilayer. Residues T34–I780 lie on the Lumenal side of the membrane. The interval H47 to T90 is disordered. Over residues A57–S85 the composition is skewed to low complexity. T62 carries O-linked (GalNAc...) threonine glycosylation. S67 is a glycosylation site (O-linked (GalNAc...) serine). O-linked (GalNAc...) threonine glycosylation is found at T68 and T70. S73 is a glycosylation site (O-linked (GalNAc...) serine). T74 and T76 each carry an O-linked (GalNAc...) threonine glycan. 2 O-linked (GalNAc...) serine glycosylation sites follow: S78 and S79. T80, T82, and T84 each carry an O-linked (GalNAc...) threonine glycan. N98 is a glycosylation site (N-linked (GlcNAc...) asparagine). L134 is a binding site for Ca(2+). N-linked (GlcNAc...) asparagine glycosylation occurs at N151. Residue H194 coordinates Zn(2+). An N-linked (GlcNAc...) asparagine glycan is attached at N217. Position 303 (H303) interacts with Zn(2+). Residue N308 is glycosylated (N-linked (GlcNAc...) asparagine). The active-site Nucleophile is the S354. Intrachain disulfides connect C362–C376 and C369–C384. N440 and N468 each carry an N-linked (GlcNAc...) asparagine glycan. The cysteines at positions 448 and 498 are disulfide-linked. E540 contributes to the Zn(2+) binding site. N-linked (GlcNAc...) asparagine glycosylation is present at N564. Y579 provides a ligand contact to Zn(2+). The Ca(2+) site is built by D712, S714, and T717. N-linked (GlcNAc...) asparagine glycosylation occurs at N730. Residues G770–I780 form a required for correct folding and localization region. An O-linked (GalNAc...) threonine glycan is attached at T779.

Belongs to the neutral ceramidase family. Zn(2+) serves as cofactor. Proteolytic cleavage of the N-terminus removes the signal-anchor and produces a soluble form of the protein. Post-translationally, N-glycosylated. Required for enzyme activity. In terms of processing, O-glycosylated. Required to retain it as a type II membrane protein at the cell surface. Phosphorylated. May prevent ubiquitination and subsequent degradation. Post-translationally, ubiquitinated, leading to its degradation by the proteasome. Ubiquitination is triggered by nitric oxide. In terms of tissue distribution, primarily expressed in intestine. Ubiquitously expressed with higher levels in kidney, skeletal muscle and heart. The ubiquitous expression observed for ASAH2 might be an experimental artifact due to the paralog ASAH2B.

Its subcellular location is the cell membrane. The protein localises to the membrane raft. It localises to the membrane. The protein resides in the caveola. It is found in the golgi apparatus membrane. Its subcellular location is the mitochondrion. The protein localises to the secreted. It localises to the extracellular exosome. The enzyme catalyses an N-acylsphing-4-enine + H2O = sphing-4-enine + a fatty acid. The catalysed reaction is N-dodecanoylsphing-4-enine + H2O = dodecanoate + sphing-4-enine. It catalyses the reaction N-hexadecanoylsphing-4-enine + H2O = sphing-4-enine + hexadecanoate. It carries out the reaction N-octanoylsphing-4-enine + H2O = octanoate + sphing-4-enine. The enzyme catalyses N-(hexanoyl)sphing-4-enine + H2O = hexanoate + sphing-4-enine. The catalysed reaction is N-octadecanoylsphing-4-enine + H2O = sphing-4-enine + octadecanoate. It catalyses the reaction N-tetradecanoylsphing-4-enine + H2O = tetradecanoate + sphing-4-enine. It carries out the reaction N-(9Z-octadecenoyl)-sphing-4-enine + H2O = sphing-4-enine + (9Z)-octadecenoate. The enzyme catalyses N-(15Z-tetracosenoyl)-sphing-4-enine + H2O = (15Z)-tetracosenoate + sphing-4-enine. The catalysed reaction is sphinganine + hexadecanoate = N-hexadecanoylsphinganine + H2O. It catalyses the reaction N-(octadecanoyl)-sphinganine + H2O = sphinganine + octadecanoate. Its pathway is lipid metabolism; sphingolipid metabolism. With respect to regulation, inhibited by dithiothreitol (DTT) and 2-mercaptoethanol. Activity is mildly stimulated by Ca(2+) and Mg(2+), but is not inhibited by EDTA. Activity is inhibited by millimolar levels of Fe(2+), Zn(2+) and Cu(2+). Inhibited by cholesterol. Functionally, plasma membrane ceramidase that hydrolyzes sphingolipid ceramides into sphingosine and free fatty acids at neutral pH. Ceramides, sphingosine, and its phosphorylated form sphingosine-1-phosphate are bioactive lipids that mediate cellular signaling pathways regulating several biological processes including cell proliferation, apoptosis and differentiation. Also catalyzes the reverse reaction allowing the synthesis of ceramides from fatty acids and sphingosine. Together with sphingomyelinase, participates in the production of sphingosine and sphingosine-1-phosphate from the degradation of sphingomyelin, a sphingolipid enriched in the plasma membrane of cells. Also participates in the hydrolysis of ceramides from the extracellular milieu allowing the production of sphingosine-1-phosphate inside and outside cells. This is the case for instance with the digestion of dietary sphingolipids in the intestinal tract. The chain is Neutral ceramidase (ASAH2) from Homo sapiens (Human).